Consider the following 160-residue polypeptide: Transcription elongation factor GreA (160 aa).

The stretch at 1-72 (MAEKTYPMTL…QISSLETKIR (72 aa)) forms a coiled coil.

It belongs to the GreA/GreB family.

Functionally, necessary for efficient RNA polymerase transcription elongation past template-encoded arresting sites. The arresting sites in DNA have the property of trapping a certain fraction of elongating RNA polymerases that pass through, resulting in locked ternary complexes. Cleavage of the nascent transcript by cleavage factors such as GreA or GreB allows the resumption of elongation from the new 3'terminus. GreA releases sequences of 2 to 3 nucleotides. This is Transcription elongation factor GreA from Streptococcus gordonii (strain Challis / ATCC 35105 / BCRC 15272 / CH1 / DL1 / V288).